A 392-amino-acid polypeptide reads, in one-letter code: Stilbene synthase 1 (392 aa).

A substrate-binding site is contributed by 55–58 (KFNR). Residue C164 is part of the active site. Residues L267 and 305 to 307 (GGP) each bind substrate.

It belongs to the thiolase-like superfamily. Chalcone/stilbene synthases family. As to quaternary structure, homodimer. In terms of tissue distribution, in leaves, expressed in palisade and spongy parenchyma cells and, to a lesser extent, in epidermal cells after induction.

The protein resides in the cytoplasm. The catalysed reaction is 4-coumaroyl-CoA + 3 malonyl-CoA + 3 H(+) = trans-resveratrol + 4 CO2 + 4 CoA. It functions in the pathway phytoalexin biosynthesis; 3,4',5-trihydroxystilbene biosynthesis; 3,4',5-trihydroxystilbene from trans-4-coumarate: step 2/2. Functionally, mediates resistance to pathogens which are sensitive to stilbenes such as Botrytis cinerea, Eutypa lata and Plasmopora viticola by enhancing the production of phytoalexins. Confers resistance to Phytophthora palmivora when expressed in papaya. This is Stilbene synthase 1 (VINST1) from Vitis vinifera (Grape).